The primary structure comprises 73 residues: Pelophylaxin-1 (73 aa).

A signal peptide spans 1 to 22; the sequence is MFTMKKSLLLVFFLGTIALSLC. Residues 23–41 constitute a propeptide that is removed on maturation; that stretch reads EEERGADDDNGGEITDEEI. A disulfide bond links C67 and C73.

In terms of tissue distribution, expressed by the skin glands.

The protein localises to the secreted. Antimicrobial peptide. This chain is Pelophylaxin-1, found in Pelophylax fukienensis (Fukien gold-striped pond frog).